We begin with the raw amino-acid sequence, 201 residues long: Methylated-DNA--protein-cysteine methyltransferase (201 aa).

DNA contacts are provided by tyrosine 131, glycine 132, and arginine 146. The active-site Nucleophile; methyl group acceptor is cysteine 163.

This sequence belongs to the MGMT family.

The protein localises to the nucleus. The enzyme catalyses a 6-O-methyl-2'-deoxyguanosine in DNA + L-cysteinyl-[protein] = S-methyl-L-cysteinyl-[protein] + a 2'-deoxyguanosine in DNA. The catalysed reaction is a 4-O-methyl-thymidine in DNA + L-cysteinyl-[protein] = a thymidine in DNA + S-methyl-L-cysteinyl-[protein]. Involved in the cellular defense against the biological effects of O6-methylguanine (O6-MeG) and O4-methylthymine (O4-MeT) in DNA. Repairs the methylated nucleobase in DNA by stoichiometrically transferring the methyl group to a cysteine residue in the enzyme. This is a suicide reaction: the enzyme is irreversibly inactivated. This is Methylated-DNA--protein-cysteine methyltransferase (MGT1) from Lodderomyces elongisporus (strain ATCC 11503 / CBS 2605 / JCM 1781 / NBRC 1676 / NRRL YB-4239) (Yeast).